The following is a 688-amino-acid chain: Homoaconitase, mitochondrial (688 aa).

The transit peptide at 1–19 (MALLYLSTRSSLKKTGARC) directs the protein to the mitochondrion. Cys-346, Cys-406, and Cys-409 together coordinate [4Fe-4S] cluster.

It belongs to the aconitase/IPM isomerase family. It depends on [4Fe-4S] cluster as a cofactor.

It localises to the mitochondrion. It catalyses the reaction (2R,3S)-homoisocitrate = cis-homoaconitate + H2O. It participates in amino-acid biosynthesis; L-lysine biosynthesis via AAA pathway; L-alpha-aminoadipate from 2-oxoglutarate: step 3/5. Functionally, catalyzes the reversible hydration of cis-homoaconitate to (2R,3S)-homoisocitrate, a step in the alpha-aminoadipate pathway for lysine biosynthesis. The sequence is that of Homoaconitase, mitochondrial (LYS4) from Debaryomyces hansenii (strain ATCC 36239 / CBS 767 / BCRC 21394 / JCM 1990 / NBRC 0083 / IGC 2968) (Yeast).